The chain runs to 132 residues: Large ribosomal subunit protein bL21 (132 aa).

The tract at residues 112 to 132 (AEKPARKPRAKKTNEVTTDGA) is disordered.

It belongs to the bacterial ribosomal protein bL21 family. As to quaternary structure, part of the 50S ribosomal subunit. Contacts protein L20.

This protein binds to 23S rRNA in the presence of protein L20. The chain is Large ribosomal subunit protein bL21 from Dehalococcoides mccartyi (strain ATCC BAA-2266 / KCTC 15142 / 195) (Dehalococcoides ethenogenes (strain 195)).